A 521-amino-acid polypeptide reads, in one-letter code: Organic cation/carnitine transporter 6 (521 aa).

Residues Met-1–Ser-37 are Cytoplasmic-facing. A helical transmembrane segment spans residues Leu-38–Phe-58. Topologically, residues Asp-59 to Arg-123 are extracellular. N-linked (GlcNAc...) asparagine glycosylation occurs at Asn-79. A helical membrane pass occupies residues Gly-124–Ile-144. Residues Pro-145 to Leu-154 lie on the Cytoplasmic side of the membrane. A helical transmembrane segment spans residues Val-155–Ile-177. At Tyr-178–Lys-182 the chain is on the extracellular side. A helical transmembrane segment spans residues Phe-183–Ile-200. Ile-200–Arg-207 is an ATP binding site. The Cytoplasmic portion of the chain corresponds to Ser-201–Thr-213. A helical transmembrane segment spans residues Met-214–Ala-234. The Extracellular segment spans residues Gln-235–Tyr-241. Residues Leu-242 to Leu-262 traverse the membrane as a helical segment. Topologically, residues Glu-263–Arg-326 are cytoplasmic. The chain crosses the membrane as a helical span at residues Ile-327–Ala-347. The Extracellular portion of the chain corresponds to Ala-348–Tyr-356. The chain crosses the membrane as a helical span at residues Leu-357–Leu-377. The Cytoplasmic segment spans residues Glu-378–Ser-385. The chain crosses the membrane as a helical span at residues Val-386–Leu-406. Residues Gly-407 to Ala-412 lie on the Extracellular side of the membrane. Residues Phe-413–Phe-433 form a helical membrane-spanning segment. Topologically, residues Met-434–Thr-447 are cytoplasmic. A helical membrane pass occupies residues Met-448 to Gly-468. The Extracellular portion of the chain corresponds to Arg-469 to Ser-473. The chain crosses the membrane as a helical span at residues Val-474–Pro-494. At Glu-495 to Cys-521 the chain is on the cytoplasmic side.

The protein belongs to the major facilitator (TC 2.A.1) superfamily. Organic cation transporter (TC 2.A.1.19) family. Expressed in roots and stems. In the stem of secondary inflorescences, localized to the phloem. Also present in flowers, specifically in the stamen, in the filaments and the connective, and restricted to major veins in leaves.

The protein resides in the vacuole membrane. Its function is as follows. High affinity carnitine transporter involved in the active cellular uptake of carnitine. Also transports organic cations. The chain is Organic cation/carnitine transporter 6 (OCT6) from Arabidopsis thaliana (Mouse-ear cress).